An 826-amino-acid polypeptide reads, in one-letter code: Ubiquitin carboxyl-terminal hydrolase 16 (826 aa).

The UBP-type zinc-finger motif lies at 22–142 (PVCRHIRKGL…QVVDYVRKQA (121 aa)). Cys24, His26, Cys48, Cys51, Cys74, Cys77, Cys82, His90, His94, His103, Cys116, and Cys119 together coordinate Zn(2+). Residue Lys140 forms a Glycyl lysine isopeptide (Lys-Gly) (interchain with G-Cter in SUMO2) linkage. Residues 144 to 189 (NTTPESAEDNGNIELENKKLEKESKNEQEREKKENMARENPSMNST) are disordered. Positions 158-180 (LENKKLEKESKNEQEREKKENMA) are enriched in basic and acidic residues. Ser188 carries the post-translational modification Phosphoserine. Residues 195–825 (KGLSNLGNTC…QAYLLFYERI (631 aa)) form the USP domain. Cys204 functions as the Nucleophile in the catalytic mechanism. The segment covering 393–407 (SGKKSINDKNLKKTM) has biased composition (basic and acidic residues). Positions 393–458 (SGKKSINDKN…QAKNQRRQQK (66 aa)) are disordered. Acidic residues predominate over residues 408–419 (EDEDKDSEEEKD). Position 414 is a phosphoserine (Ser414). A compositionally biased stretch (basic and acidic residues) spans 420–429 (NDSYLKERND). A compositionally biased stretch (basic residues) spans 437–457 (HLQKKAKKQAKKQAKNQRRQQ). A phosphoserine mark is found at Ser530 and Ser551. His760 functions as the Proton acceptor in the catalytic mechanism.

This sequence belongs to the peptidase C19 family. USP16 subfamily. Homotetramer. Associates with late pre-40S ribosomes. Interacts with CEP78; promoting deubiquitination of tektins. Phosphorylated at the onset of mitosis and dephosphorylated during the metaphase/anaphase transition. Phosphorylation by AURKB enhances the deubiquitinase activity.

Its subcellular location is the nucleus. It catalyses the reaction Thiol-dependent hydrolysis of ester, thioester, amide, peptide and isopeptide bonds formed by the C-terminal Gly of ubiquitin (a 76-residue protein attached to proteins as an intracellular targeting signal).. Specifically deubiquitinates 'Lys-120' of histone H2A (H2AK119Ub), a specific tag for epigenetic transcriptional repression, thereby acting as a coactivator. Deubiquitination of histone H2A is a prerequisite for subsequent phosphorylation at 'Ser-11' of histone H3 (H3S10ph), and is required for chromosome segregation when cells enter into mitosis. In resting B- and T-lymphocytes, phosphorylation by AURKB leads to enhance its activity, thereby maintaining transcription in resting lymphocytes. Regulates Hox gene expression via histone H2A deubiquitination. Prefers nucleosomal substrates. Does not deubiquitinate histone H2B. Also deubiquitinates non-histone proteins, such as ribosomal protein RPS27A: deubiquitination of monoubiquitinated RPS27A promotes maturation of the 40S ribosomal subunit. Also mediates deubiquitination of tektin proteins (TEKT1, TEKT2, TEK3, TEKT4 and TEKT5), promoting their stability. The sequence is that of Ubiquitin carboxyl-terminal hydrolase 16 from Bos taurus (Bovine).